The following is a 250-amino-acid chain: Acetylglutamate kinase (250 aa).

Substrate is bound by residues 41–42, arginine 63, and asparagine 156; that span reads GG.

It belongs to the acetylglutamate kinase family. ArgB subfamily.

The protein localises to the cytoplasm. The catalysed reaction is N-acetyl-L-glutamate + ATP = N-acetyl-L-glutamyl 5-phosphate + ADP. Its pathway is amino-acid biosynthesis; L-arginine biosynthesis; N(2)-acetyl-L-ornithine from L-glutamate: step 2/4. Catalyzes the ATP-dependent phosphorylation of N-acetyl-L-glutamate. The chain is Acetylglutamate kinase from Listeria welshimeri serovar 6b (strain ATCC 35897 / DSM 20650 / CCUG 15529 / CIP 8149 / NCTC 11857 / SLCC 5334 / V8).